Consider the following 464-residue polypeptide: 26S proteasome regulatory subunit 7 homolog B (464 aa).

Residue 246-253 (GPPGSGKT) coordinates ATP. Lys-452 participates in a covalent cross-link: Glycyl lysine isopeptide (Lys-Gly) (interchain with G-Cter in ubiquitin).

Belongs to the AAA ATPase family. As to quaternary structure, component of the 19S regulatory particle (RP/PA700) base subcomplex of the 26S proteasome. The 26S proteasome is composed of a core protease (CP), known as the 20S proteasome, capped at one or both ends by the 19S regulatory particle (RP/PA700). The RP/PA700 complex is composed of at least 17 different subunits in two subcomplexes, the base and the lid, which form the portions proximal and distal to the 20S proteolytic core, respectively.

It is found in the cytoplasm. The protein resides in the nucleus. Functionally, the 26S proteasome is involved in the ATP-dependent degradation of ubiquitinated proteins. The regulatory (or ATPase) complex confers ATP dependency and substrate specificity to the 26S complex. The protein is 26S proteasome regulatory subunit 7 homolog B (RPT1B) of Arabidopsis thaliana (Mouse-ear cress).